The chain runs to 396 residues: 8-amino-7-oxononanoate synthase (396 aa).

Arg-19 serves as a coordination point for substrate. Pyridoxal 5'-phosphate is bound at residue 106 to 107; that stretch reads GY. A substrate-binding site is contributed by His-131. Pyridoxal 5'-phosphate contacts are provided by Ser-176, His-204, and Thr-233. Lys-236 bears the N6-(pyridoxal phosphate)lysine mark. Residue Thr-350 participates in substrate binding.

This sequence belongs to the class-II pyridoxal-phosphate-dependent aminotransferase family. BioF subfamily. In terms of assembly, homodimer. Requires pyridoxal 5'-phosphate as cofactor.

The enzyme catalyses 6-carboxyhexanoyl-[ACP] + L-alanine + H(+) = (8S)-8-amino-7-oxononanoate + holo-[ACP] + CO2. It functions in the pathway cofactor biosynthesis; biotin biosynthesis. Catalyzes the decarboxylative condensation of pimeloyl-[acyl-carrier protein] and L-alanine to produce 8-amino-7-oxononanoate (AON), [acyl-carrier protein], and carbon dioxide. This chain is 8-amino-7-oxononanoate synthase, found in Pseudomonas syringae pv. syringae (strain B728a).